Reading from the N-terminus, the 324-residue chain is Probable UDP-sugar transporter protein SLC35A4 (324 aa).

The Cytoplasmic portion of the chain corresponds to 1 to 18; sequence MSVEDGGMPGLSRPRQAR. Residues 19 to 39 form a helical membrane-spanning segment; sequence WTLMLLLSTAMYGAHAPLLAL. At 40–52 the chain is on the lumenal side; that stretch reads CHVDGRVPFRPSS. A helical membrane pass occupies residues 53-73; sequence AVLLTELTKLLLCAFSLLVGW. Residues 74 to 85 are Cytoplasmic-facing; the sequence is QAWPQGAPPWRQ. The chain crosses the membrane as a helical span at residues 86–106; that stretch reads AAPFALSALLYGANNNLVIYL. Over 107–142 the chain is Lumenal; sequence QRYMDPSTYQVLSNLKIGSTAVLYCLCLRHRLSVRQ. Residues 143-163 traverse the membrane as a helical segment; it reads GLALLLLMAAGACYAAGGLQV. Residues 164–180 lie on the Cytoplasmic side of the membrane; it reads PGNTLPRPPPAAAASPM. A helical transmembrane segment spans residues 181 to 201; the sequence is PLHITPLGLLLLILYCLISGL. Topologically, residues 202–214 are lumenal; that stretch reads SSVYTELLMKRQQ. A helical membrane pass occupies residues 215-235; the sequence is LPLALQNLFLYTFGVLLNLGL. Over 236–250 the chain is Cytoplasmic; that stretch reads HAGGGPGPGLLEGFS. Residues 251 to 271 traverse the membrane as a helical segment; sequence GWAALVVLSQALNGLLMSVVM. Over 272-275 the chain is Lumenal; the sequence is KHGS. A helical membrane pass occupies residues 276–298; the sequence is SITRLFVVSCSLVVNAVLSAVLL. At 299–324 the chain is on the cytoplasmic side; it reads RLQLTAAFFLATLLIGLAMRLYYGSR.

Belongs to the nucleotide-sugar transporter family. SLC35A subfamily. In terms of assembly, found in a complex with SLC35A2 and SLC35A3.

It localises to the golgi apparatus membrane. The enzyme catalyses CDP-L-ribitol(in) + CDP(out) = CDP-L-ribitol(out) + CDP(in). In terms of biological role, mediates the transport of CDP-ribitol. Does not exhibit CMP-sialic acid, UDP-galactose and UDP-N-acetylglucosamine transport activity. In Pongo abelii (Sumatran orangutan), this protein is Probable UDP-sugar transporter protein SLC35A4.